Consider the following 643-residue polypeptide: Phosphomethylpyrimidine synthase (643 aa).

Substrate-binding positions include Asn248, Met277, Tyr306, His342, 362-364, 403-406, and Glu442; these read SRG and DGLR. His446 lines the Zn(2+) pocket. Residue Tyr469 participates in substrate binding. His510 provides a ligand contact to Zn(2+). The [4Fe-4S] cluster site is built by Cys590, Cys593, and Cys598.

The protein belongs to the ThiC family. As to quaternary structure, homodimer. [4Fe-4S] cluster is required as a cofactor.

The enzyme catalyses 5-amino-1-(5-phospho-beta-D-ribosyl)imidazole + S-adenosyl-L-methionine = 4-amino-2-methyl-5-(phosphooxymethyl)pyrimidine + CO + 5'-deoxyadenosine + formate + L-methionine + 3 H(+). It functions in the pathway cofactor biosynthesis; thiamine diphosphate biosynthesis. Catalyzes the synthesis of the hydroxymethylpyrimidine phosphate (HMP-P) moiety of thiamine from aminoimidazole ribotide (AIR) in a radical S-adenosyl-L-methionine (SAM)-dependent reaction. This chain is Phosphomethylpyrimidine synthase, found in Burkholderia mallei (strain NCTC 10247).